A 1984-amino-acid chain; its full sequence is Sodium channel protein type 9 subunit alpha (1984 aa).

The Cytoplasmic segment spans residues 1-125 (MAMLPPPGPQ…RRISIKILVH (125 aa)). Residues 26–47 (RIAEGKTKEPKEEKKDDHDEGP) are compositionally biased toward basic and acidic residues. A disordered region spans residues 26-55 (RIAEGKTKEPKEEKKDDHDEGPKPSSDLEA). The stretch at 112–408 (FSPLRRISIK…VAMAYEEQNQ (297 aa)) is one I repeat. The chain crosses the membrane as a helical span at residues 126 to 145 (SLFSMLIMCTILTNCIFMTM). Topologically, residues 146–150 (NNPAE) are extracellular. A helical membrane pass occupies residues 151-172 (WTKNVEYTFTGIYTFESLVKIF). At 173–185 (ARGFCVGEFTFLR) the chain is on the cytoplasmic side. The chain crosses the membrane as a helical span at residues 186-204 (DPWNWLDFIVIVFAYLTEF). The Extracellular portion of the chain corresponds to 205-210 (VNLGNV). Asparagine 209 carries N-linked (GlcNAc...) asparagine glycosylation. The helical transmembrane segment at 211-227 (SALRTFRVLRALKTISV) threads the bilayer. Over 228–241 (IPGLKTIVGALIQS) the chain is Cytoplasmic. A helical membrane pass occupies residues 242 to 267 (VKKLSDVIILTVFCLSVFALIGLQLF). At 268 to 344 (MGHLKHKCLR…PDYGYTSFDT (77 aa)) the chain is on the extracellular side. Cysteine 275 and cysteine 322 are disulfide-bonded. Asparagine 281 carries an N-linked (GlcNAc...) asparagine glycan. The segment at residues 345 to 361 (FSWAFLALFRLMTQDYW) is an intramembrane region (pore-forming). The Extracellular portion of the chain corresponds to 362–374 (ENLYQQTLRAAGK). Residues 375–400 (TYMIFFVVVIFLGSFYLINLILAVVA) traverse the membrane as a helical segment. At 401–742 (MAYEEQNQAN…FIYIIVMDPF (342 aa)) the chain is on the cytoplasmic side. The segment covering 459–469 (SSSETSKLSSK) has biased composition (low complexity). Disordered stretches follow at residues 459–517 (SSSE…LGVE) and 563–610 (GSET…PPML). A compositionally biased stretch (basic residues) spans 472–484 (KERRNRRKKKNQK). Basic and acidic residues-rich tracts occupy residues 487–508 (SSGE…ESIS) and 571–583 (DEHS…ESRR). One copy of the II repeat lies at 723 to 986 (CSPFWIKFKK…EEDTDANNLQ (264 aa)). Residues 743 to 759 (VDLAITICIVLNTLFMA) traverse the membrane as a helical segment. Over 760 to 768 (MEHHPMTEE) the chain is Extracellular. Residues 769–793 (FKNVLVVGNLVFTGIFAAEMVLKLI) form a helical membrane-spanning segment. Topologically, residues 794–802 (AMDPYEYFQ) are cytoplasmic. The helical transmembrane segment at 803–819 (VGWNVFDSLIVTLSLVE) threads the bilayer. Over 820–828 (LFLADVEGL) the chain is Extracellular. Residues 829–845 (SVLRSFRLLRVFKLAKS) traverse the membrane as a helical segment. Residues 846-862 (WPTLNMLIKIIGNSVGP) lie on the Cytoplasmic side of the membrane. A helical membrane pass occupies residues 863–885 (LGNLTLVLAIIVFIFAVVGMQLF). Residues 886–912 (GKSYKECVCKINDDCSLPRWHMNDFFH) are Extracellular-facing. A disulfide bond links cysteine 894 and cysteine 900. The pore-forming intramembrane region spans 913–925 (SFLIVFRVLCGEW). Residues 926-937 (IETMWDCMEVAG) are Extracellular-facing. Cysteine 932 and cysteine 941 are joined by a disulfide. Residues 938-964 (QAMCLIVYMMVMVIGNLVVLNLFLALL) traverse the membrane as a helical segment. Over 965 to 1184 (LSSFSSDNLS…WWNIRKTCYR (220 aa)) the chain is Cytoplasmic. Positions 1087–1146 (PIAPGESDLENMNTEELSSDSESEYSKERLNRSSSSECSTVDNALPGEGEEAEAEPVNSD) are disordered. The segment covering 1118–1128 (RSSSSECSTVD) has biased composition (polar residues). Acidic residues predominate over residues 1134–1146 (EGEEAEAEPVNSD). One copy of the III repeat lies at 1177–1485 (NIRKTCYRIV…KKYYNAMKKL (309 aa)). Residues 1185-1209 (IVEHSWFESFIVLMILLSSGALAFE) form a helical membrane-spanning segment. The Extracellular segment spans residues 1210–1221 (DIYIEKKKTIKI). The helical transmembrane segment at 1222–1247 (ILEYADKIFTYIFILEMLLKWVAYGY) threads the bilayer. The Cytoplasmic portion of the chain corresponds to 1248-1249 (KT). The chain crosses the membrane as a helical span at residues 1250 to 1275 (YFTNAWCWLDFLIVDVSLVTLVANTL). Residues 1276-1284 (GYSDLGPIK) lie on the Extracellular side of the membrane. A helical membrane pass occupies residues 1285–1301 (SLRTLRALRPLRALSRF). The Cytoplasmic portion of the chain corresponds to 1302–1314 (EGMRVVVNALIGA). A helical transmembrane segment spans residues 1315–1339 (IPSIMNVLLVCLIFWLIFSIMGVNL). The Extracellular portion of the chain corresponds to 1340–1391 (FAGKFYQCVNTTDDSRFPTKQVSNRSECFALMNGSQNVRWKNLKVNFDNVGL). Cysteine 1347 and cysteine 1367 are oxidised to a cystine. Asparagine 1349, asparagine 1363, and asparagine 1372 each carry an N-linked (GlcNAc...) asparagine glycan. Residues 1392 to 1402 (RYLSLLQVATF) constitute an intramembrane region (pore-forming). Residues 1403–1428 (KGWMDIMYAAVDSVNVDQQPSYEHNL) lie on the Extracellular side of the membrane. A helical transmembrane segment spans residues 1429-1454 (YMYIYFVIFIIFGSFFTLNLFIGVII). The Cytoplasmic portion of the chain corresponds to 1455–1511 (DNFNQQKKKLGGQDIFMTEEQKKYYNAMKKLGSKKPQKPIPRPGNKFQGCIFDLVTN). Phosphoserine; by PKC is present on serine 1487. The stretch at 1494-1792 (IPRPGNKFQG…WEKFDPDATQ (299 aa)) is one IV repeat. Residues 1512–1531 (QAFDITIMILICLNMVTMMV) traverse the membrane as a helical segment. The Extracellular segment spans residues 1532–1542 (EKEGQSDYMTD). A helical membrane pass occupies residues 1543-1564 (VLYWINVVFIILFTGECVLKLI). The Cytoplasmic portion of the chain corresponds to 1565 to 1573 (SLRHYYFTI). Residues 1574–1595 (GWNIFDFVVVILSIVGMFLAEL) traverse the membrane as a helical segment. The Extracellular segment spans residues 1596–1604 (IETYFVSPT). The helical transmembrane segment at 1605–1624 (LFRVIRLARIGRILRLIKGA) threads the bilayer. Residues 1625 to 1637 (KGIRTLLFALMMS) lie on the Cytoplasmic side of the membrane. Residues 1638–1660 (LPALFNIGLLLFLVMFIYAIFGM) form a helical membrane-spanning segment. At 1661 to 1683 (SNFAYVKKEAGINDMFNFETFGN) the chain is on the extracellular side. The segment at residues 1684–1696 (SMICLFQITTSAG) is an intramembrane region (pore-forming). The Extracellular portion of the chain corresponds to 1697–1730 (WDGLLAPILNSAPPDCDPKKVHPGSSTEGDCGSP). An intrachain disulfide couples cysteine 1712 to cysteine 1727. The chain crosses the membrane as a helical span at residues 1731–1756 (SVGIFYFVSYIIISFLVVVNMYIAVI). At 1757–1984 (LENFSVATEE…KGKDGKETKK (228 aa)) the chain is on the cytoplasmic side. The region spanning 1886–1915 (EDVSATVIQRAYRRYRLRQNVKNISSIYIK) is the IQ domain. Positions 1924–1984 (PNKGDIVFDN…KGKDGKETKK (61 aa)) are disordered. Polar residues predominate over residues 1933–1956 (NVNSSSPEKTDATASTISPPSYDS). Over residues 1958 to 1984 (TKPDKEKYEKDKTEKEDKGKDGKETKK) the composition is skewed to basic and acidic residues.

Belongs to the sodium channel (TC 1.A.1.10) family. Nav1.7/SCN9A subfamily. In terms of assembly, the Nav1.7 voltage-gated sodium channel consists of an ion-conducting alpha subunit SCN9A which is functional on its own regulated by one or more beta-1 (SCN1B), beta-2 (SCN2B), beta-3 (SCN3B) and beta-4 (SCN4B) subunits. SCN1B and SCN3B are non-covalently associated with SCN9A. SCN2B and SCN4B are disulfide-linked to SCN9A. SCN1B regulates channel inactivation. Interacts with NEDD4 and NEDD4L; regulates Nav1.7 activity most probably through ubiquitination and subsequent endocytosis. Interacts with TMEM233; modulates the gating properties of NaV1.7. Post-translationally, phosphorylation at Ser-1487 by PKC in a highly conserved cytoplasmic loop increases peak sodium currents. Ubiquitinated by NEDD4L; which may promote its endocytosis. Expressed in the sciatic nerve, spinal cord, brainstem, cerebellum and cortex, but not expressed in the lung, skeletal and cardiac muscles, kidney and liver.

It is found in the cell membrane. Its subcellular location is the cell projection. It localises to the neuron projection. The protein resides in the axon. It carries out the reaction Na(+)(in) = Na(+)(out). In terms of biological role, pore-forming subunit of Nav1.7, a voltage-gated sodium (Nav) channel that directly mediates the depolarizing phase of action potentials in excitable membranes. Navs, also called VGSCs (voltage-gated sodium channels) or VDSCs (voltage-dependent sodium channels), operate by switching between closed and open conformations depending on the voltage difference across the membrane. In the open conformation they allow Na(+) ions to selectively pass through the pore, along their electrochemical gradient. The influx of Na(+) ions provokes membrane depolarization, initiating the propagation of electrical signals throughout cells and tissues. Nav1.7 plays a crucial role in controlling the excitability and action potential propagation from nociceptor neurons, thereby contributing to the sensory perception of pain. This chain is Sodium channel protein type 9 subunit alpha, found in Oryctolagus cuniculus (Rabbit).